The sequence spans 165 residues: Crossover junction endodeoxyribonuclease RuvC (165 aa).

Residues aspartate 7, glutamate 66, and aspartate 138 contribute to the active site. Aspartate 7, glutamate 66, and aspartate 138 together coordinate Mg(2+).

This sequence belongs to the RuvC family. As to quaternary structure, homodimer which binds Holliday junction (HJ) DNA. The HJ becomes 2-fold symmetrical on binding to RuvC with unstacked arms; it has a different conformation from HJ DNA in complex with RuvA. In the full resolvosome a probable DNA-RuvA(4)-RuvB(12)-RuvC(2) complex forms which resolves the HJ. Requires Mg(2+) as cofactor.

The protein localises to the cytoplasm. It catalyses the reaction Endonucleolytic cleavage at a junction such as a reciprocal single-stranded crossover between two homologous DNA duplexes (Holliday junction).. Functionally, the RuvA-RuvB-RuvC complex processes Holliday junction (HJ) DNA during genetic recombination and DNA repair. Endonuclease that resolves HJ intermediates. Cleaves cruciform DNA by making single-stranded nicks across the HJ at symmetrical positions within the homologous arms, yielding a 5'-phosphate and a 3'-hydroxyl group; requires a central core of homology in the junction. The consensus cleavage sequence is 5'-(A/T)TT(C/G)-3'. Cleavage occurs on the 3'-side of the TT dinucleotide at the point of strand exchange. HJ branch migration catalyzed by RuvA-RuvB allows RuvC to scan DNA until it finds its consensus sequence, where it cleaves and resolves the cruciform DNA. The sequence is that of Crossover junction endodeoxyribonuclease RuvC from Ruegeria pomeroyi (strain ATCC 700808 / DSM 15171 / DSS-3) (Silicibacter pomeroyi).